Here is a 376-residue protein sequence, read N- to C-terminus: Transmembrane protein 183A (376 aa).

2 disordered regions span residues 1-20 (MARG…AMPK) and 100-127 (MDAQ…ELDG). The helical transmembrane segment at 300–320 (LNFIFIPIVMGMIFTLFTINV) threads the bilayer.

Belongs to the TMEM183 family.

The protein resides in the membrane. The polypeptide is Transmembrane protein 183A (TMEM183A) (Homo sapiens (Human)).